The primary structure comprises 159 residues: Bacterioferritin (159 aa).

The Ferritin-like diiron domain maps to 1–145 (MQGDPDVLRL…TQLALMGQLG (145 aa)). The Fe cation site is built by Glu-18 and Glu-51. Met-52 contributes to the heme b binding site. Fe cation is bound by residues His-54, Glu-94, Glu-127, and His-130.

It belongs to the bacterioferritin family. As to quaternary structure, homooligomer of 24 subunits, arranged as 12 dimers, that are packed together to form an approximately spherical molecule with a central cavity, in which large amounts of iron can be deposited. Heme b is required as a cofactor.

The protein localises to the cytoplasm. The protein resides in the cytosol. It is found in the membrane. It catalyses the reaction 4 Fe(2+) + O2 + 4 H(+) = 4 Fe(3+) + 2 H2O. It carries out the reaction Fe(2+)(in) = Fe(2+)(out). In terms of biological role, iron-storage protein, whose ferroxidase center binds Fe(2+), oxidizes it using dioxygen to Fe(3+), and participates in the subsequent Fe(3+) oxide mineral core formation within the central cavity of the BFR protein shell. Probably plays a crucial role in the intracellular existence of this organism by functioning as a temporary depository for iron in iron deprivation. The protein is Bacterioferritin (bfr) of Mycobacterium leprae (strain TN).